A 457-amino-acid chain; its full sequence is Bifunctional protein GlmU (457 aa).

The tract at residues 1–230 is pyrophosphorylase; sequence MPLSLPLHIV…PREVEGVNDL (230 aa). UDP-N-acetyl-alpha-D-glucosamine-binding positions include 12–15, lysine 26, glutamine 78, 83–84, 105–107, glycine 140, glutamate 155, asparagine 170, and asparagine 228; these read LAAG, GT, and YGD. Aspartate 107 lines the Mg(2+) pocket. Asparagine 228 is a Mg(2+) binding site. A linker region spans residues 231–251; the sequence is WQLTQLERTWQIRAARALCLQ. Residues 252-457 form an N-acetyltransferase region; the sequence is GARVADPARL…DGWQRPKKKT (206 aa). UDP-N-acetyl-alpha-D-glucosamine contacts are provided by arginine 334 and lysine 352. The active-site Proton acceptor is the histidine 364. UDP-N-acetyl-alpha-D-glucosamine is bound by residues tyrosine 367 and asparagine 378. Residues alanine 381, 387 to 388, serine 406, alanine 424, and arginine 441 each bind acetyl-CoA; that span reads NY.

It in the N-terminal section; belongs to the N-acetylglucosamine-1-phosphate uridyltransferase family. In the C-terminal section; belongs to the transferase hexapeptide repeat family. In terms of assembly, homotrimer. The cofactor is Mg(2+).

Its subcellular location is the cytoplasm. It carries out the reaction alpha-D-glucosamine 1-phosphate + acetyl-CoA = N-acetyl-alpha-D-glucosamine 1-phosphate + CoA + H(+). The catalysed reaction is N-acetyl-alpha-D-glucosamine 1-phosphate + UTP + H(+) = UDP-N-acetyl-alpha-D-glucosamine + diphosphate. It functions in the pathway nucleotide-sugar biosynthesis; UDP-N-acetyl-alpha-D-glucosamine biosynthesis; N-acetyl-alpha-D-glucosamine 1-phosphate from alpha-D-glucosamine 6-phosphate (route II): step 2/2. Its pathway is nucleotide-sugar biosynthesis; UDP-N-acetyl-alpha-D-glucosamine biosynthesis; UDP-N-acetyl-alpha-D-glucosamine from N-acetyl-alpha-D-glucosamine 1-phosphate: step 1/1. It participates in bacterial outer membrane biogenesis; LPS lipid A biosynthesis. Functionally, catalyzes the last two sequential reactions in the de novo biosynthetic pathway for UDP-N-acetylglucosamine (UDP-GlcNAc). The C-terminal domain catalyzes the transfer of acetyl group from acetyl coenzyme A to glucosamine-1-phosphate (GlcN-1-P) to produce N-acetylglucosamine-1-phosphate (GlcNAc-1-P), which is converted into UDP-GlcNAc by the transfer of uridine 5-monophosphate (from uridine 5-triphosphate), a reaction catalyzed by the N-terminal domain. This chain is Bifunctional protein GlmU, found in Xylella fastidiosa (strain M12).